A 250-amino-acid polypeptide reads, in one-letter code: 3-deoxy-manno-octulosonate cytidylyltransferase (250 aa).

It belongs to the KdsB family.

It is found in the cytoplasm. It carries out the reaction 3-deoxy-alpha-D-manno-oct-2-ulosonate + CTP = CMP-3-deoxy-beta-D-manno-octulosonate + diphosphate. It functions in the pathway nucleotide-sugar biosynthesis; CMP-3-deoxy-D-manno-octulosonate biosynthesis; CMP-3-deoxy-D-manno-octulosonate from 3-deoxy-D-manno-octulosonate and CTP: step 1/1. Its pathway is bacterial outer membrane biogenesis; lipopolysaccharide biosynthesis. Its function is as follows. Activates KDO (a required 8-carbon sugar) for incorporation into bacterial lipopolysaccharide in Gram-negative bacteria. The chain is 3-deoxy-manno-octulosonate cytidylyltransferase from Xanthomonas campestris pv. campestris (strain 8004).